The chain runs to 392 residues: Xyloside xylosyltransferase 1 (392 aa).

The Cytoplasmic portion of the chain corresponds to 1–19; it reads MGLLRGGAACARAMARLGA. The helical; Signal-anchor for type II membrane protein transmembrane segment at 20–42 threads the bilayer; sequence LRSHYCALLLAAALAVCAFYYLG. At 43 to 392 the chain is on the lumenal side; it reads SGRETFSSAT…GNCNTPIPED (350 aa). 103–105 provides a ligand contact to UDP-alpha-D-xylose; it reads MFT. Position 225 (Asp225) interacts with Mn(2+). Leu226 contacts UDP-alpha-D-xylose. Asp227 is a binding site for Mn(2+). Positions 262–265 are interaction with target proteins; it reads HTFW. Positions 289, 327, and 330 each coordinate UDP-alpha-D-xylose. A glycoprotein-binding residues include Gln330 and Trp359. Disulfide bonds link Cys349–Cys374 and Cys356–Cys385. His382 contacts Mn(2+). An a glycoprotein-binding site is contributed by Asn384.

The protein belongs to the glycosyltransferase 8 family. Homodimer. Dimer formation may be essential for the retention in endoplasmic reticulum. Requires Mg(2+) as cofactor. Mn(2+) serves as cofactor.

It localises to the endoplasmic reticulum membrane. The enzyme catalyses 3-O-[alpha-D-xylosyl-(1-&gt;3)-beta-D-glucosyl]-L-seryl-[EGF-like domain protein] + UDP-alpha-D-xylose = 3-O-[alpha-D-xylosyl-(1-&gt;3)-alpha-D-xylosyl-(1-&gt;3)-beta-D-glucosyl]-L-seryl-[EGF-like domain protein] + UDP + H(+). Functionally, alpha-1,3-xylosyltransferase, which elongates the O-linked xylose-glucose disaccharide attached to EGF-like repeats in the extracellular domain of target proteins by catalyzing the addition of the second xylose. Known targets include Notch proteins and coagulation factors, such as F9. The protein is Xyloside xylosyltransferase 1 (Xxylt1) of Mus musculus (Mouse).